Here is a 493-residue protein sequence, read N- to C-terminus: Probable NADPH:adrenodoxin oxidoreductase, mitochondrial (493 aa).

Residues Ser-26, Glu-48, Leu-56, and Ile-100 each contribute to the FAD site. Residues 177 to 180 (NGNV), 223 to 224 (RR), and Glu-235 contribute to the NADP(+) site. FAD is bound by residues Trp-407 and 414-416 (GVI). Gly-414 serves as a coordination point for NADP(+).

Belongs to the ferredoxin--NADP reductase type 1 family. It depends on FAD as a cofactor.

It localises to the mitochondrion inner membrane. The catalysed reaction is 2 reduced [adrenodoxin] + NADP(+) + H(+) = 2 oxidized [adrenodoxin] + NADPH. Functionally, adrenodoxin reductase transfers electrons from NADPH to adrenodoxin, which is involved in heme A biosynthesis and in iron-sulfur cluster assembly. Involved in the electron transfer to heme A synthase COX15, a heme protein that catalyzes the conversion of heme O to heme A. Required for the de novo synthesis of Fe-S clusters on iron sulfur cluster assembly protein ISU1. Involved in electron delivery for Fe-S cluster synthesis. Essential for coenzyme Q biosynthesis. May be involved in the electron transfer required for the hydroxylation reaction performed by COQ6. May play a role in cellular and mitochondrial iron homeostasis. In Saccharomyces cerevisiae (strain ATCC 204508 / S288c) (Baker's yeast), this protein is Probable NADPH:adrenodoxin oxidoreductase, mitochondrial.